Here is a 178-residue protein sequence, read N- to C-terminus: Ribosome maturation factor RimM (178 aa).

Positions 99–178 constitute a PRC barrel domain; sequence EGDFYWHDLI…TIEVDWDAGF (80 aa).

Belongs to the RimM family. Binds ribosomal protein uS19.

The protein resides in the cytoplasm. In terms of biological role, an accessory protein needed during the final step in the assembly of 30S ribosomal subunit, possibly for assembly of the head region. Essential for efficient processing of 16S rRNA. May be needed both before and after RbfA during the maturation of 16S rRNA. It has affinity for free ribosomal 30S subunits but not for 70S ribosomes. This Mannheimia succiniciproducens (strain KCTC 0769BP / MBEL55E) protein is Ribosome maturation factor RimM.